Reading from the N-terminus, the 391-residue chain is F-box/kelch-repeat protein At4g05080 (391 aa).

The 48-residue stretch at 2–49 (TMMFDLTQDLVKEILSRVPITSLGAVRSTCKGWNALSKDRILCKAKPK) folds into the F-box domain. 2 Kelch repeats span residues 100–143 (HMYY…TFCL) and 144–194 (RYDN…SASV). Positions 369–385 (RRRRERNSKRKEKKRKG) are enriched in basic residues. Residues 369-391 (RRRRERNSKRKEKKRKGTTNNKV) are disordered.

The chain is F-box/kelch-repeat protein At4g05080 from Arabidopsis thaliana (Mouse-ear cress).